The primary structure comprises 424 residues: Phosphomethylpyrimidine synthase (424 aa).

Substrate-binding positions include asparagine 66, methionine 95, tyrosine 124, histidine 163, 185–187 (SRG), 226–229 (DGMR), and glutamate 265. Histidine 269 lines the Zn(2+) pocket. Phenylalanine 292 serves as a coordination point for substrate. A Zn(2+)-binding site is contributed by histidine 333. Cysteine 408, cysteine 411, and cysteine 415 together coordinate [4Fe-4S] cluster.

This sequence belongs to the ThiC family. The cofactor is [4Fe-4S] cluster.

The enzyme catalyses 5-amino-1-(5-phospho-beta-D-ribosyl)imidazole + S-adenosyl-L-methionine = 4-amino-2-methyl-5-(phosphooxymethyl)pyrimidine + CO + 5'-deoxyadenosine + formate + L-methionine + 3 H(+). The protein operates within cofactor biosynthesis; thiamine diphosphate biosynthesis. Functionally, catalyzes the synthesis of the hydroxymethylpyrimidine phosphate (HMP-P) moiety of thiamine from aminoimidazole ribotide (AIR) in a radical S-adenosyl-L-methionine (SAM)-dependent reaction. This chain is Phosphomethylpyrimidine synthase, found in Thermotoga petrophila (strain ATCC BAA-488 / DSM 13995 / JCM 10881 / RKU-1).